The primary structure comprises 261 residues: 4-hydroxy-tetrahydrodipicolinate reductase (261 aa).

An NAD(+)-binding site is contributed by 9–14 (GCLGRM). An NADP(+)-binding site is contributed by arginine 36. NAD(+) is bound by residues 97–99 (GTT) and 118–121 (SANM). Histidine 151 functions as the Proton donor/acceptor in the catalytic mechanism. (S)-2,3,4,5-tetrahydrodipicolinate is bound at residue histidine 152. The Proton donor role is filled by lysine 155. Position 161 to 162 (161 to 162 (GT)) interacts with (S)-2,3,4,5-tetrahydrodipicolinate.

This sequence belongs to the DapB family.

It localises to the cytoplasm. It catalyses the reaction (S)-2,3,4,5-tetrahydrodipicolinate + NAD(+) + H2O = (2S,4S)-4-hydroxy-2,3,4,5-tetrahydrodipicolinate + NADH + H(+). It carries out the reaction (S)-2,3,4,5-tetrahydrodipicolinate + NADP(+) + H2O = (2S,4S)-4-hydroxy-2,3,4,5-tetrahydrodipicolinate + NADPH + H(+). Its pathway is amino-acid biosynthesis; L-lysine biosynthesis via DAP pathway; (S)-tetrahydrodipicolinate from L-aspartate: step 4/4. Its function is as follows. Catalyzes the conversion of 4-hydroxy-tetrahydrodipicolinate (HTPA) to tetrahydrodipicolinate. In Wolbachia sp. subsp. Drosophila simulans (strain wRi), this protein is 4-hydroxy-tetrahydrodipicolinate reductase.